The chain runs to 88 residues: uncharacterized protein (88 aa).

This is an uncharacterized protein from Vaccinia virus (strain Copenhagen) (VACV).